Consider the following 467-residue polypeptide: Asparagine--tRNA ligase (467 aa).

The protein belongs to the class-II aminoacyl-tRNA synthetase family. Homodimer.

It localises to the cytoplasm. It carries out the reaction tRNA(Asn) + L-asparagine + ATP = L-asparaginyl-tRNA(Asn) + AMP + diphosphate + H(+). This Legionella pneumophila (strain Paris) protein is Asparagine--tRNA ligase.